The chain runs to 250 residues: Imidazole glycerol phosphate synthase subunit HisF (250 aa).

Catalysis depends on residues D11 and D130.

This sequence belongs to the HisA/HisF family. In terms of assembly, heterodimer of HisH and HisF.

It is found in the cytoplasm. It catalyses the reaction 5-[(5-phospho-1-deoxy-D-ribulos-1-ylimino)methylamino]-1-(5-phospho-beta-D-ribosyl)imidazole-4-carboxamide + L-glutamine = D-erythro-1-(imidazol-4-yl)glycerol 3-phosphate + 5-amino-1-(5-phospho-beta-D-ribosyl)imidazole-4-carboxamide + L-glutamate + H(+). It functions in the pathway amino-acid biosynthesis; L-histidine biosynthesis; L-histidine from 5-phospho-alpha-D-ribose 1-diphosphate: step 5/9. Functionally, IGPS catalyzes the conversion of PRFAR and glutamine to IGP, AICAR and glutamate. The HisF subunit catalyzes the cyclization activity that produces IGP and AICAR from PRFAR using the ammonia provided by the HisH subunit. This is Imidazole glycerol phosphate synthase subunit HisF from Bacteroides fragilis (strain YCH46).